A 185-amino-acid chain; its full sequence is Iron-sulfur assembly protein 2 (185 aa).

Fe cation is bound by residues cysteine 89, cysteine 175, and cysteine 177.

This sequence belongs to the HesB/IscA family.

The protein localises to the mitochondrion matrix. Functionally, involved in the assembly of mitochondrial and cytoplasmic iron-sulfur proteins. Probably involved in the binding of an intermediate of Fe/S cluster assembly. In Saccharomyces cerevisiae (strain ATCC 204508 / S288c) (Baker's yeast), this protein is Iron-sulfur assembly protein 2 (ISA2).